The sequence spans 197 residues: Dephospho-CoA kinase (197 aa).

One can recognise a DPCK domain in the interval 3-197; it reads VLGLTGSIGL…IDELRGQRGS (195 aa). 11–16 contributes to the ATP binding site; the sequence is GLGKST.

The protein belongs to the CoaE family.

The protein resides in the cytoplasm. The enzyme catalyses 3'-dephospho-CoA + ATP = ADP + CoA + H(+). The protein operates within cofactor biosynthesis; coenzyme A biosynthesis; CoA from (R)-pantothenate: step 5/5. Catalyzes the phosphorylation of the 3'-hydroxyl group of dephosphocoenzyme A to form coenzyme A. The protein is Dephospho-CoA kinase of Mesorhizobium japonicum (strain LMG 29417 / CECT 9101 / MAFF 303099) (Mesorhizobium loti (strain MAFF 303099)).